Reading from the N-terminus, the 281-residue chain is DegV domain-containing protein (281 aa).

Positions 3–280 (WKIVSDSGCD…EGGLLMGYEI (278 aa)) constitute a DegV domain. The hexadecanoate site is built by S63 and S91.

Its function is as follows. May bind long-chain fatty acids, such as palmitate, and may play a role in lipid transport or fatty acid metabolism. In Streptococcus gordonii, this protein is DegV domain-containing protein.